A 681-amino-acid chain; its full sequence is Cell cycle checkpoint protein RAD17 (681 aa).

The RAD1-binding motif signature appears at 17 to 25 (DWVDPSFDD). A disordered region spans residues 42–61 (VNNSSHRRKNGPSTLESSRF). T55 carries the post-translational modification Phosphothreonine. Residues S71 and S86 each carry the phosphoserine modification. 137-144 (GPPGCGKT) serves as a coordination point for ATP. 2 disordered regions span residues 344 to 377 (SSKG…KPDR) and 606 to 681 (HGMI…SDGT). S359 is modified (phosphoserine). Residues 432-681 (LVEPEEVVEM…IIEDYESDGT (250 aa)) are interaction with MCM7. Polar residues predominate over residues 631–662 (EPTQATVPETWSLPLSQNSASELPASQPQPFS). T633 carries the post-translational modification Phosphothreonine; by ATM. 2 positions are modified to phosphoserine; by ATR and ATM: S646 and S656. Residues 666–681 (DMEENIIIEDYESDGT) are compositionally biased toward acidic residues.

This sequence belongs to the rad17/RAD24 family. As to quaternary structure, part of a DNA-binding complex containing RFC2, RFC3, RFC4 and RFC5. Interacts with RAD1 and RAD9 within the 9-1-1 (RAD1-RAD9-HUS1) complex. Interacts with RAD9B, POLE, SNU13 and MCM7. DNA damage promotes interaction with ATR or ATM and disrupts interaction with the 9-1-1 (RAD1-RAD9-HUS1) complex. Interacts (when phosphorylated) with NBN; promoting recruitment of the MRN complex to DNA damage sites. Post-translationally, phosphorylation on Ser-646 and Ser-656 is cell cycle-regulated, enhanced by genotoxic stress, and required for activation of checkpoint signaling. Phosphorylation is mediated by ATR upon UV or replication arrest, whereas it may be mediated both by ATR and ATM upon ionizing radiation. Phosphorylation on both sites is required for interaction with RAD1 but dispensable for interaction with RFC3 or RFC4. Phosphorylation at Thr-633 by ATM in response to DNA damage promotes interaction with NBN and recruitment of the MRN complex to DNA damage sites. In terms of tissue distribution, overexpressed in various cancer cell lines and in colon carcinoma (at protein level). Isoform 2 and isoform 3 are the most abundant isoforms in non irradiated cells (at protein level). Ubiquitous at low levels. Highly expressed in testis, where it is expressed within the germinal epithelium of the seminiferous tubuli. Weakly expressed in seminomas (testicular tumors).

Its subcellular location is the nucleus. The protein resides in the chromosome. In terms of biological role, essential for sustained cell growth, maintenance of chromosomal stability, and ATR-dependent checkpoint activation upon DNA damage. Has a weak ATPase activity required for binding to chromatin. Participates in the recruitment of the 9-1-1 (RAD1-RAD9-HUS1) complex and RHNO1 onto chromatin, and in CHEK1 activation. Involved in homologous recombination by mediating recruitment of the MRN complex to DNA damage sites. May also serve as a sensor of DNA replication progression. The sequence is that of Cell cycle checkpoint protein RAD17 from Homo sapiens (Human).